We begin with the raw amino-acid sequence, 270 residues long: Basigin (270 aa).

The N-terminal stretch at 1 to 21 (MAAVLFALLALALLRAGGASA) is a signal peptide. Residues 22 to 103 (AAGTVTTSVQ…TGEATLTVDG (82 aa)) form the Ig-like C2-type domain. Residues 22-207 (AAGTVTTSVQ…VTLRVRSRLA (186 aa)) lie on the Extracellular side of the membrane. Cystine bridges form between Cys41/Cys87 and Cys126/Cys185. N-linked (GlcNAc...) asparagine glycosylation is found at Asn44, Asn75, Asn152, and Asn186. The 99-residue stretch at 105–203 (PRIKAVKKSE…DAAVVTLRVR (99 aa)) folds into the Ig-like V-type domain. A helical transmembrane segment spans residues 208-228 (ALWPFLGIVAEVLVLVTVIFI). Over 229 to 270 (YEKRRKPDEVLDDEDAGAAPLKSSGHHVNDDKGKNVRQRNAS) the chain is Cytoplasmic. The segment at 239 to 270 (LDDEDAGAAPLKSSGHHVNDDKGKNVRQRNAS) is disordered. At Ser252 the chain carries Phosphoserine.

As to quaternary structure, homooligomer. Interacts with VEGFA, KDR/VEGFR2, PPIA/CYPA, SLC1A3, SLC16A12, SLC16A11, ATP1B2, MAG, L1CAM and AJAP1. Interacts with PPIL2; regulates BSG transport to the cell membrane. Interacts with XKR8; promoting its localization at the cell membrane. Interacts with SLC16A3; interaction mediates SLC16A3 targeting to the plasma membrane. Interacts with SLC16A1; interaction mediates SLC16A1 targeting to the plasma membrane. Interacts with SLC16A6; this interaction mediates targeting to the plasma membrane.

Its subcellular location is the cell membrane. The protein localises to the endoplasmic reticulum membrane. The protein resides in the basolateral cell membrane. Its function is as follows. Signaling receptor for cyclophilins, essential for PPIA/CYPA and PPIB/CYPB-dependent signaling related to chemotaxis and adhesion of immune cells. Plays an important role in targeting the monocarboxylate transporters SLC16A1/GLUT1, SLC16A3, SLC16A8, SLC16A11 and SLC16A12 to the plasma membrane. Acts as a coreceptor for vascular endothelial growth factor receptor 2 (KDR/VEGFR2) in endothelial cells enhancing its VEGFA-mediated activation and downstream signaling. Promotes angiogenesis through EPAS1/HIF2A-mediated up-regulation of VEGFA and KDR/VEGFR2 in endothelial cells. The protein is Basigin (BSG) of Oryctolagus cuniculus (Rabbit).